The sequence spans 272 residues: Tryptophan synthase alpha chain (272 aa).

Catalysis depends on proton acceptor residues Glu-49 and Glu-60.

It belongs to the TrpA family. In terms of assembly, tetramer of two alpha and two beta chains.

The catalysed reaction is (1S,2R)-1-C-(indol-3-yl)glycerol 3-phosphate + L-serine = D-glyceraldehyde 3-phosphate + L-tryptophan + H2O. Its pathway is amino-acid biosynthesis; L-tryptophan biosynthesis; L-tryptophan from chorismate: step 5/5. In terms of biological role, the alpha subunit is responsible for the aldol cleavage of indoleglycerol phosphate to indole and glyceraldehyde 3-phosphate. The protein is Tryptophan synthase alpha chain of Legionella pneumophila subsp. pneumophila (strain Philadelphia 1 / ATCC 33152 / DSM 7513).